A 477-amino-acid chain; its full sequence is Protoporphyrinogen oxidase (477 aa).

Residues 9 to 14 (GGGISG), W42, 57 to 60 (GPRG), V257, A449, and 454 to 456 (VAV) contribute to the FAD site.

It belongs to the protoporphyrinogen/coproporphyrinogen oxidase family. Protoporphyrinogen oxidase subfamily. Monomer. Homodimer. The cofactor is FAD.

The protein resides in the mitochondrion inner membrane. The catalysed reaction is protoporphyrinogen IX + 3 O2 = protoporphyrin IX + 3 H2O2. Its pathway is porphyrin-containing compound metabolism; protoporphyrin-IX biosynthesis; protoporphyrin-IX from protoporphyrinogen-IX: step 1/1. Inhibited by acifluorfen. Functionally, catalyzes the 6-electron oxidation of protoporphyrinogen-IX to form protoporphyrin-IX. This chain is Protoporphyrinogen oxidase (Ppox), found in Mus musculus (Mouse).